Here is a 226-residue protein sequence, read N- to C-terminus: Cytidylate kinase (226 aa).

Gly-10 to Thr-18 lines the ATP pocket.

It belongs to the cytidylate kinase family. Type 1 subfamily.

The protein resides in the cytoplasm. The enzyme catalyses CMP + ATP = CDP + ADP. It carries out the reaction dCMP + ATP = dCDP + ADP. This Streptococcus pyogenes serotype M18 (strain MGAS8232) protein is Cytidylate kinase.